We begin with the raw amino-acid sequence, 1603 residues long: Vitellogenin-3 (1603 aa).

The signal sequence occupies residues 1 to 15; sequence MKSIIIASLVALAIA. Residues 24–685 form the Vitellogenin domain; it reads FSPKSEYVYK…EKNAFLPKEV (662 aa). N1266 is a glycosylation site (N-linked (GlcNAc...) asparagine). The region spanning 1306-1475 is the VWFD domain; that stretch reads ATCKVGQSEV…SYLLKNEECE (170 aa). 2 cysteine pairs are disulfide-bonded: C1308–C1438 and C1330–C1474.

In terms of tissue distribution, expressed in the intestine of adult hermaphrodites.

The protein resides in the secreted. Functionally, precursor of the egg-yolk proteins that are sources of nutrients during embryonic development. Together with other vitellogenins, may play a role in modulating life-span, acting via induction of autophagy and lysosomal lipolysis. This Caenorhabditis elegans protein is Vitellogenin-3 (vit-3).